A 359-amino-acid polypeptide reads, in one-letter code: Protein mab-21-like 2 (359 aa).

It belongs to the mab-21 family.

Its subcellular location is the nucleus. It is found in the cytoplasm. In terms of biological role, required for eye morphogenesis. May promote the survival of proliferating retinal progenitor cells. In Danio rerio (Zebrafish), this protein is Protein mab-21-like 2 (mab21l2).